The primary structure comprises 78 residues: Short neurotoxin SNTX6 (78 aa).

Positions 1-21 (MKTLLLTFLVVTIVCLDLGYT) are cleaved as a signal peptide. Disulfide bonds link C24–C40, C33–C58, C62–C70, and C71–C76.

It belongs to the three-finger toxin family. Short-chain subfamily. Expressed by the venom gland.

The protein localises to the secreted. Functionally, this three-finger toxin binds and inhibits the nicotinic acetylcholine receptor (nAChR). This chain is Short neurotoxin SNTX6, found in Ophiophagus hannah (King cobra).